The sequence spans 343 residues: S-adenosylmethionine:tRNA ribosyltransferase-isomerase (343 aa).

It belongs to the QueA family. In terms of assembly, monomer.

The protein resides in the cytoplasm. The catalysed reaction is 7-aminomethyl-7-carbaguanosine(34) in tRNA + S-adenosyl-L-methionine = epoxyqueuosine(34) in tRNA + adenine + L-methionine + 2 H(+). It functions in the pathway tRNA modification; tRNA-queuosine biosynthesis. Functionally, transfers and isomerizes the ribose moiety from AdoMet to the 7-aminomethyl group of 7-deazaguanine (preQ1-tRNA) to give epoxyqueuosine (oQ-tRNA). In Dehalococcoides mccartyi (strain CBDB1), this protein is S-adenosylmethionine:tRNA ribosyltransferase-isomerase.